The following is a 624-amino-acid chain: Heat shock factor protein 5 (624 aa).

A DNA-binding region spans residues 11-228 (NPNNFPAKLW…FHRSFRRDNL (218 aa)). 5 disordered regions span residues 52-77 (LSPPGPGAGGAGGAGSSGGGGGSGVG), 112-138 (GAAGPGPGPGAGGPAGDGPLHHFHSPH), 186-214 (SASASTSPLQHQDPPPQPAGPRPEQHGPV), 429-461 (CPSSQANRGQHILPNANSSNPSSTSQASQLEPL), and 572-605 (GPANKSTKDTGLSTPARYRERRSNSQGKSPDLHL). 2 stretches are compositionally biased toward gly residues: residues 58-77 (GAGGAGGAGSSGGGGGSGVG) and 112-127 (GAAGPGPGPGAGGPAG). Low complexity-rich tracts occupy residues 186–197 (SASASTSPLQHQ) and 442–457 (PNANSSNPSSTSQASQ). Position 600 is a phosphoserine (S600).

This sequence belongs to the HSF family. In terms of assembly, homooligomer. In terms of tissue distribution, highly expressed in testis particularly in spermatocytes (at protein level). Not expressed in fetal testis and ovary.

Its subcellular location is the nucleus. It is found in the chromosome. Functionally, DNA-binding transcription factor that is essential for male fertility, spermatogenesis and meiotic prophase progression in spermatocytes under non-stress conditions. Positvely and negatively regulates gene expression to ensure progression of meiotic prophase beyond pachytene stage in spermatocytes. Plays a role in male germline meiotic sex chromosome remodeling and silencing through regulation of SMARCA4. The polypeptide is Heat shock factor protein 5 (Hsf5) (Mus musculus (Mouse)).